The sequence spans 290 residues: tRNA dimethylallyltransferase (290 aa).

Gly-11–Ser-18 serves as a coordination point for ATP. Residue Thr-13–Ser-18 coordinates substrate. Interaction with substrate tRNA regions lie at residues Asp-36 to Gln-39 and Gln-158 to Arg-162.

This sequence belongs to the IPP transferase family. In terms of assembly, monomer. Mg(2+) is required as a cofactor.

It catalyses the reaction adenosine(37) in tRNA + dimethylallyl diphosphate = N(6)-dimethylallyladenosine(37) in tRNA + diphosphate. Catalyzes the transfer of a dimethylallyl group onto the adenine at position 37 in tRNAs that read codons beginning with uridine, leading to the formation of N6-(dimethylallyl)adenosine (i(6)A). The protein is tRNA dimethylallyltransferase of Bartonella henselae (strain ATCC 49882 / DSM 28221 / CCUG 30454 / Houston 1) (Rochalimaea henselae).